The primary structure comprises 1362 residues: ATP-dependent RNA helicase dhx29 (1362 aa).

Residues 1–10 (MGGKNKKNRH) show a composition bias toward basic residues. Positions 1–76 (MGGKNKKNRH…FASSSDSGVS (76 aa)) are disordered. Residues 18 to 27 (GATAAANRPR) show a composition bias toward low complexity. Basic and acidic residues predominate over residues 28-41 (AAAEPRPGGEDAAK). Low complexity predominate over residues 66–76 (SFASSSDSGVS). Positions 89 to 109 (EAKLEKRIISLINEHKKLNSN) form a coiled coil. Disordered stretches follow at residues 182-215 (QRARAKFQAPPQRPSAANESATEKGEEGASLKGN) and 229-257 (EQGSDDDDDDDDVKEEEKETTLEKFDPNE). Acidic residues predominate over residues 231–242 (GSDDDDDDDDVK). The segment covering 243 to 257 (EEEKETTLEKFDPNE) has biased composition (basic and acidic residues). The stretch at 285 to 305 (QKEAQERIRGYQQEMKSLEDH) forms a coiled coil. The tract at residues 317–336 (VKSESKQPKPALPPSEDEPL) is disordered. Residues 576–749 (LETLKRHRVI…FTHCPIIRIS (174 aa)) form the Helicase ATP-binding domain. An ATP-binding site is contributed by 589-596 (GETGSGKS). Positions 696 to 699 (DEVH) match the DEAH box motif. Positions 852–1021 (DISPEYRNVE…ELCLHIMKCD (170 aa)) constitute a Helicase C-terminal domain.

Belongs to the DEAD box helicase family. DEAH subfamily. In terms of assembly, part of the 43S pre-initiation complex (PIC).

It is found in the cytoplasm. It carries out the reaction ATP + H2O = ADP + phosphate + H(+). Functionally, ATP-binding RNA helicase involved in translation initiation. Part of the 43S pre-initiation complex that is required for efficient initiation on mRNAs of higher eukaryotes with structured 5'-UTRs by promoting efficient NTPase-dependent 48S complex formation. Specifically binds to the 40S ribosome near the mRNA entrance. Does not possess a processive helicase activity. The protein is ATP-dependent RNA helicase dhx29 of Xenopus laevis (African clawed frog).